Consider the following 263-residue polypeptide: Acyl-[acyl-carrier-protein]--UDP-N-acetylglucosamine O-acyltransferase (263 aa).

The protein belongs to the transferase hexapeptide repeat family. LpxA subfamily. Homotrimer.

The protein resides in the cytoplasm. It carries out the reaction a (3R)-hydroxyacyl-[ACP] + UDP-N-acetyl-alpha-D-glucosamine = a UDP-3-O-[(3R)-3-hydroxyacyl]-N-acetyl-alpha-D-glucosamine + holo-[ACP]. The protein operates within glycolipid biosynthesis; lipid IV(A) biosynthesis; lipid IV(A) from (3R)-3-hydroxytetradecanoyl-[acyl-carrier-protein] and UDP-N-acetyl-alpha-D-glucosamine: step 1/6. Its function is as follows. Involved in the biosynthesis of lipid A, a phosphorylated glycolipid that anchors the lipopolysaccharide to the outer membrane of the cell. The chain is Acyl-[acyl-carrier-protein]--UDP-N-acetylglucosamine O-acyltransferase from Campylobacter jejuni subsp. jejuni serotype O:23/36 (strain 81-176).